The primary structure comprises 392 residues: MDALVEDDICILNHEKAHKRDTVTPVSIYSGDESVASHFALVTAYEDIKKRLKDSEKENSLLKKRIRFLEEKLIARFDEETSSVGREQVNKAYHAYREVCIDRDNLKSKLDKMNKDNSESLKVLNEQLQSKEVELLQPRTEVETQQVMRNLNPPSSNWEVEKLSCDLKIHGLEQELELMRKECSDLKIELQKAKQTDPYQEDNLKSRDLQKLSISSDNMQHAYWELKREMSNLHLVTQVQAELLRKLKTSTAIKKACAPVGCSEDLGRDSTKLHLMNFTATYTRHPPVSPNGKALCHTASSPLPGDVKVLSEKAILQSWTDNERSIPNDGTCFQEHSSYGRNSLEDNSWVFPSPPKSSETAFGETKTKTLPLPNLPPLHYLDQHNQNCLYKN.

Residues Met-1–Asp-197 are homodimerization. Coiled coils occupy residues Ala-40 to Arg-76, Asp-102 to Leu-135, and Asp-166 to Thr-196. The tract at residues Ser-216 to Cys-257 is interaction with TBK1 and IKBKE. Ser-318 and Ser-353 each carry phosphoserine. Positions Glu-345–Thr-365 are disordered.

As to quaternary structure, homodimer. Interacts with IKBKE, TBK1 and TICAM1. Interacts with TAX1BP1. Interacts with CALCOCO2. Ubiquitinated via 'Lys-48'-linked polyubiquitination by TRIM38, leading to its degradation.

It localises to the cytoplasm. Functionally, adapter protein which binds TBK1 and IKBKE playing a role in antiviral innate immunity. Activates serine/threonine-protein kinase TBK1 and facilitates its oligomerization. Enhances the phosphorylation of NF-kappa-B p65 subunit RELA by TBK1. Promotes TBK1-induced as well as TNF-alpha or PMA-induced activation of NF-kappa-B. Participates in IFNB promoter activation via TICAM1. The sequence is that of 5-azacytidine-induced protein 2 (AZI2) from Pongo abelii (Sumatran orangutan).